The following is a 1342-amino-acid chain: DNA-directed RNA polymerase subunit beta (1342 aa).

This sequence belongs to the RNA polymerase beta chain family. As to quaternary structure, the RNAP catalytic core consists of 2 alpha, 1 beta, 1 beta' and 1 omega subunit. When a sigma factor is associated with the core the holoenzyme is formed, which can initiate transcription.

It catalyses the reaction RNA(n) + a ribonucleoside 5'-triphosphate = RNA(n+1) + diphosphate. DNA-dependent RNA polymerase catalyzes the transcription of DNA into RNA using the four ribonucleoside triphosphates as substrates. This Pseudoalteromonas atlantica (strain T6c / ATCC BAA-1087) protein is DNA-directed RNA polymerase subunit beta.